The primary structure comprises 126 residues: Desulfoferrodoxin (126 aa).

Fe cation is bound by residues C10, C13, C29, C30, H49, H69, H75, C116, and H119.

Belongs to the desulfoferrodoxin family. As to quaternary structure, homodimer. Requires Fe(3+) as cofactor. Cu(2+) is required as a cofactor.

The catalysed reaction is reduced [rubredoxin] + superoxide + 2 H(+) = oxidized [rubredoxin] + H2O2. Its function is as follows. Catalyzes the one-electron reduction of superoxide anion radical to hydrogen peroxide at a nonheme ferrous iron center. Plays a fundamental role in case of oxidative stress via its superoxide detoxification activity. The chain is Desulfoferrodoxin (dfx) from Nitratidesulfovibrio vulgaris (strain ATCC 29579 / DSM 644 / CCUG 34227 / NCIMB 8303 / VKM B-1760 / Hildenborough) (Desulfovibrio vulgaris).